An 853-amino-acid chain; its full sequence is DNA mismatch repair protein MutS (853 aa).

614–621 (GPNMGGKS) is a binding site for ATP.

This sequence belongs to the DNA mismatch repair MutS family.

Its function is as follows. This protein is involved in the repair of mismatches in DNA. It is possible that it carries out the mismatch recognition step. This protein has a weak ATPase activity. This is DNA mismatch repair protein MutS from Shigella boydii serotype 18 (strain CDC 3083-94 / BS512).